The sequence spans 350 residues: Biotin synthase (350 aa).

The Radical SAM core domain maps to 38 to 256 (NHVQVSTLLS…IAIARIMMPQ (219 aa)). [4Fe-4S] cluster contacts are provided by Cys-53, Cys-57, and Cys-60. 4 residues coordinate [2Fe-2S] cluster: Cys-97, Cys-128, Cys-188, and Arg-260.

It belongs to the radical SAM superfamily. Biotin synthase family. In terms of assembly, homodimer. The cofactor is [4Fe-4S] cluster. Requires [2Fe-2S] cluster as cofactor.

The enzyme catalyses (4R,5S)-dethiobiotin + (sulfur carrier)-SH + 2 reduced [2Fe-2S]-[ferredoxin] + 2 S-adenosyl-L-methionine = (sulfur carrier)-H + biotin + 2 5'-deoxyadenosine + 2 L-methionine + 2 oxidized [2Fe-2S]-[ferredoxin]. The protein operates within cofactor biosynthesis; biotin biosynthesis; biotin from 7,8-diaminononanoate: step 2/2. Functionally, catalyzes the conversion of dethiobiotin (DTB) to biotin by the insertion of a sulfur atom into dethiobiotin via a radical-based mechanism. In Vibrio parahaemolyticus serotype O3:K6 (strain RIMD 2210633), this protein is Biotin synthase.